The sequence spans 423 residues: Glycine amidinotransferase, mitochondrial (423 aa).

The transit peptide at 1–43 directs the protein to the mitochondrion; sequence MLRVRCLRGGSRGAEAVHYIGSRLGGSLTGWVQRTFQSTQAAT. Residues serine 46 and serine 49 each carry the phosphoserine modification. An arginine-binding site is contributed by aspartate 170. Residues aspartate 254 and histidine 303 contribute to the active site. Positions 305, 322, 354, and 355 each coordinate arginine. Position 385 is an N6-acetyllysine (lysine 385). Cysteine 407 acts as the Amidino-cysteine intermediate in catalysis.

This sequence belongs to the amidinotransferase family. As to quaternary structure, homodimer. As to expression, highly expressed in the kidney and pancreas, especially in the proximal tubules of the kidney, and alpha cells of the pancreatic islets (at protein level). Moderately expressed in liver hepatocytes (at protein level). Expressed in the kidney, pancreas, liver, colon, ileum, jejunum, heart and skeletal muscle. In reproductive tissues, expressed in the testis, epididymis, ovary, oviduct and uterus. Expressed throughout the brain in neurons, astrocytes and oligodendrocytes. In 12.5 dpc embryos, it is expressed in the middle part of the somites, hepatic primordium and wall of the dorsal aorta. Expressed in 15.5 dpc embryos in isolated cells throughout the central nervous system, skeletal muscles, gonad primordia, caudal somites, liver and pancreas, but not in the choroid plexus, root ganglia or kidney. Expressed in skeletal muscle, kidney, pancreas, central nervous system, liver and intestine epithelial cells, but not in epidermis, dermis, olfactory epithelium, trachea, lung, stomach or heart in 18.5 dpc embryos.

The protein resides in the mitochondrion inner membrane. It carries out the reaction L-arginine + glycine = guanidinoacetate + L-ornithine. The catalysed reaction is 4-aminobutanoate + L-arginine = 4-guanidinobutanoate + L-ornithine. It catalyses the reaction beta-alanine + L-arginine = 3-guanidinopropanoate + L-ornithine. The enzyme catalyses taurine + L-arginine = taurocyamine + L-ornithine. It functions in the pathway amine and polyamine biosynthesis; creatine biosynthesis; creatine from L-arginine and glycine: step 1/2. Its function is as follows. Transamidinase that catalyzes the transfer of the amidino group of L-arginine onto the amino moiety of acceptor metabolites such as glycine, beta-alanine, gamma-aminobutyric acid (GABA) and taurine yielding the corresponding guanidine derivatives. Catalyzes the rate-limiting step of creatine biosynthesis, namely the transfer of the amidino group from L-arginine to glycine to generate guanidinoacetate, which is then methylated by GAMT to form creatine. Provides creatine as a source for ATP generation in tissues with high energy demands, in particular skeletal muscle, heart and brain. The polypeptide is Glycine amidinotransferase, mitochondrial (Gatm) (Rattus norvegicus (Rat)).